Here is a 229-residue protein sequence, read N- to C-terminus: 7-cyano-7-deazaguanine synthase (229 aa).

8–18 (FSGGQDSTTCL) lines the ATP pocket. Residues Cys-186, Cys-195, Cys-198, and Cys-201 each contribute to the Zn(2+) site.

Belongs to the QueC family. It depends on Zn(2+) as a cofactor.

It catalyses the reaction 7-carboxy-7-deazaguanine + NH4(+) + ATP = 7-cyano-7-deazaguanine + ADP + phosphate + H2O + H(+). Its pathway is purine metabolism; 7-cyano-7-deazaguanine biosynthesis. Functionally, catalyzes the ATP-dependent conversion of 7-carboxy-7-deazaguanine (CDG) to 7-cyano-7-deazaguanine (preQ(0)). In Edwardsiella ictaluri (strain 93-146), this protein is 7-cyano-7-deazaguanine synthase.